Consider the following 278-residue polypeptide: Sulfide dehydrogenase subunit beta (278 aa).

The propeptide occupies 1–4 (MFKI). One can recognise an FAD-binding FR-type domain in the interval 1-95 (MFKILRKERL…LGPLGKPSHI (95 aa)). 3 residues coordinate [2Fe-2S] cluster: C222, C225, and C237.

As to quaternary structure, heterodimer of alpha and beta subunits. FAD is required as a cofactor. It depends on [2Fe-2S] cluster as a cofactor.

It localises to the cytoplasm. It catalyses the reaction n sulfur + hydrogen sulfide + NADP(+) = (n+1) sulfur + NADPH. The catalysed reaction is 2 reduced [2Fe-2S]-[ferredoxin] + NADP(+) + H(+) = 2 oxidized [2Fe-2S]-[ferredoxin] + NADPH. Functionally, a bifunctional enzyme that catalyzes the reduction of elemental sulfur or polysulfide to hydrogen sulfide with NADPH as electron donor. Also functions as a reduced ferredoxin:NADP oxidoreductase with a very high affinity for reduced ferredoxin. Exhibits a broad specificity for various physiological and non-physiological substrates with varied reduction potentials such as methyl viologen, benzyl viologen, FAD, FMN, methylene blue, 2,6-dichlorophenolindophenol (DCIP), cytochrome C and ferricyanide with highest preference for benzyl viologen. Does not reduce fumarate, succinate, nitrate, nitrite, sulfate, sulfite or protons. Does not possess any hydrogenase activity or NADPH-dependent glutamate synthase activity. In Pyrococcus furiosus (strain ATCC 43587 / DSM 3638 / JCM 8422 / Vc1), this protein is Sulfide dehydrogenase subunit beta.